A 222-amino-acid polypeptide reads, in one-letter code: Coiled-coil domain-containing protein 43 (222 aa).

Lys93 is covalently cross-linked (Glycyl lysine isopeptide (Lys-Gly) (interchain with G-Cter in SUMO1)). Positions 119–143 (SEEEKQRKAALLAQYADVTDEEDEA) form a coiled coil. The segment at 136-222 (VTDEEDEADK…KRTQKGERKR (87 aa)) is disordered. Thr137 is subject to Phosphothreonine. Residues 152 to 168 (STANVSSDRTLFRNTNV) are compositionally biased toward polar residues. Residues 172-209 (LNARKLERDSLRDESQRKKEQDKLQREKDKLAKQERKE) show a composition bias toward basic and acidic residues. Residues 175–217 (RKLERDSLRDESQRKKEQDKLQREKDKLAKQERKEKEKKRTQK) are a coiled coil. The span at 210–222 (KEKKRTQKGERKR) shows a compositional bias: basic residues.

This sequence belongs to the CCDC43 family.

The polypeptide is Coiled-coil domain-containing protein 43 (Ccdc43) (Mus musculus (Mouse)).